The sequence spans 237 residues: Dynein axonemal assembly factor 19 (237 aa).

A coiled-coil region spans residues 8 to 33; that stretch reads NFKALEKELQAALAADEKYKRENAAK.

Belongs to the DNAAF19/PR46b family. Homodimer.

The protein resides in the cytoplasm. The protein localises to the cell projection. It localises to the cilium. It is found in the flagellum. Dynein-attachment factor required for cilia motility. This is Dynein axonemal assembly factor 19 (Dnaaf19) from Mus musculus (Mouse).